A 203-amino-acid chain; its full sequence is Inosine triphosphate pyrophosphatase (203 aa).

10–15 (TGNQNK) is an ITP binding site. Glu-40 is a Mg(2+) binding site. Residues Lys-52, 68–69 (DT), Lys-85, 145–148 (FGWD), Lys-168, and 173–174 (HR) contribute to the ITP site.

This sequence belongs to the HAM1 NTPase family. Homodimer. It depends on Mg(2+) as a cofactor. The cofactor is Mn(2+).

Its subcellular location is the cytoplasm. It catalyses the reaction ITP + H2O = IMP + diphosphate + H(+). The enzyme catalyses dITP + H2O = dIMP + diphosphate + H(+). The catalysed reaction is XTP + H2O = XMP + diphosphate + H(+). Its function is as follows. Pyrophosphatase that hydrolyzes non-canonical purine nucleotides such as inosine triphosphate (ITP), deoxyinosine triphosphate (dITP) or xanthosine 5'-triphosphate (XTP) to their respective monophosphate derivatives. The enzyme does not distinguish between the deoxy- and ribose forms. Probably excludes non-canonical purines from RNA and DNA precursor pools, thus preventing their incorporation into RNA and DNA and avoiding chromosomal lesions. The protein is Inosine triphosphate pyrophosphatase of Nematostella vectensis (Starlet sea anemone).